Reading from the N-terminus, the 1078-residue chain is Exportin-1 (1078 aa).

In terms of domain architecture, Importin N-terminal spans 34–100; it reads AQQVLTQFQA…RNYIVAVMIK (67 aa).

The protein belongs to the exportin family. In terms of assembly, interacts with php4.

It localises to the nucleus. Its function is as follows. Receptor for the leucine-rich nuclear export signal (NES). The sequence is that of Exportin-1 (xpo1) from Schizosaccharomyces pombe (strain 972 / ATCC 24843) (Fission yeast).